Reading from the N-terminus, the 818-residue chain is Elongation factor G, mitochondrial (818 aa).

The transit peptide at 1-23 (MFLGRAASRTCRHSQPLRVAARA) directs the protein to the mitochondrion. The interval 67 to 96 (MASTATATKPTEEASSSDQPPAPAHKLTDN) is disordered. Over residues 69–85 (STATATKPTEEASSSDQ) the composition is skewed to polar residues. The tr-type G domain occupies 102-390 (TFQRNIGISA…GVCEYLPNPS (289 aa)). GTP-binding positions include 111–118 (AHIDSGKT), 188–192 (DTPGH), and 242–245 (NKMD).

This sequence belongs to the TRAFAC class translation factor GTPase superfamily. Classic translation factor GTPase family. EF-G/EF-2 subfamily.

It localises to the mitochondrion. It participates in protein biosynthesis; polypeptide chain elongation. In terms of biological role, mitochondrial GTPase that catalyzes the GTP-dependent ribosomal translocation step during translation elongation. During this step, the ribosome changes from the pre-translocational (PRE) to the post-translocational (POST) state as the newly formed A-site-bound peptidyl-tRNA and P-site-bound deacylated tRNA move to the P and E sites, respectively. Catalyzes the coordinated movement of the two tRNA molecules, the mRNA and conformational changes in the ribosome. The protein is Elongation factor G, mitochondrial of Coprinopsis cinerea (strain Okayama-7 / 130 / ATCC MYA-4618 / FGSC 9003) (Inky cap fungus).